A 248-amino-acid chain; its full sequence is Probable septum site-determining protein MinC (248 aa).

The tract at residues Gly94–Ile126 is disordered.

This sequence belongs to the MinC family. In terms of assembly, interacts with MinD and FtsZ.

In terms of biological role, cell division inhibitor that blocks the formation of polar Z ring septums. Rapidly oscillates between the poles of the cell to destabilize FtsZ filaments that have formed before they mature into polar Z rings. Prevents FtsZ polymerization. The sequence is that of Probable septum site-determining protein MinC from Brucella suis biovar 1 (strain 1330).